The chain runs to 208 residues: Non-specific lipid transfer protein GPI-anchored 4 (208 aa).

The signal sequence occupies residues 1 to 25; sequence MKQSLLLSFVLLLLSSSSLVTPIHA. Asparagine 27, asparagine 67, and asparagine 105 each carry an N-linked (GlcNAc...) asparagine glycan. 4 disulfides stabilise this stretch: cysteine 48–cysteine 91, cysteine 58–cysteine 75, cysteine 76–cysteine 116, and cysteine 89–cysteine 125. The segment at 136 to 181 is disordered; that stretch reads GASPVSPSAGAPTTSPSAAKSPETSATSPSSDETPSMTAPSPSSSG. Serine 179 is lipidated: GPI-anchor amidated serine. A propeptide spans 180–208 (removed in mature form); sequence SGTNILSVPALTIVFVIVSSVAYISAFSN.

Belongs to the plant LTP family. Confined to the anthers and stamen of the inflorescence, especially in pollen.

It localises to the cell membrane. Functionally, lipid transfer protein involved in seed and ovule maturation and development, probably by regulating the fatty acids homeostasis during suberin and sporopollenin biosynthesis or deposition. The protein is Non-specific lipid transfer protein GPI-anchored 4 of Arabidopsis thaliana (Mouse-ear cress).